The following is a 104-amino-acid chain: MKIRKGDTVLVISGPDKGAKGKVIEAYPQRDKVLVEGVNRIKKHVANSAPERGAESGGIVTQEAPIHVSNVMVVDSDGNPTRIGYRFDEDGKKIRVSKRNGKDI.

The protein belongs to the universal ribosomal protein uL24 family. Part of the 50S ribosomal subunit.

One of two assembly initiator proteins, it binds directly to the 5'-end of the 23S rRNA, where it nucleates assembly of the 50S subunit. Its function is as follows. One of the proteins that surrounds the polypeptide exit tunnel on the outside of the subunit. In Corynebacterium jeikeium (strain K411), this protein is Large ribosomal subunit protein uL24.